A 131-amino-acid polypeptide reads, in one-letter code: Phosphoribosyl-AMP cyclohydrolase (131 aa).

Asp78 contributes to the Mg(2+) binding site. Cys79 lines the Zn(2+) pocket. Residues Asp80 and Asp82 each coordinate Mg(2+). The Zn(2+) site is built by Cys96 and Cys103.

The protein belongs to the PRA-CH family. In terms of assembly, homodimer. Requires Mg(2+) as cofactor. It depends on Zn(2+) as a cofactor.

It is found in the cytoplasm. It catalyses the reaction 1-(5-phospho-beta-D-ribosyl)-5'-AMP + H2O = 1-(5-phospho-beta-D-ribosyl)-5-[(5-phospho-beta-D-ribosylamino)methylideneamino]imidazole-4-carboxamide. The protein operates within amino-acid biosynthesis; L-histidine biosynthesis; L-histidine from 5-phospho-alpha-D-ribose 1-diphosphate: step 3/9. Its function is as follows. Catalyzes the hydrolysis of the adenine ring of phosphoribosyl-AMP. The protein is Phosphoribosyl-AMP cyclohydrolase of Thioalkalivibrio sulfidiphilus (strain HL-EbGR7).